A 2191-amino-acid chain; its full sequence is Genome polyprotein (2191 aa).

Gly2 carries the N-myristoyl glycine; by host lipid modification. Residues 2-1501 (GAQVSTQKTG…HVSRAFICLQ (1500 aa)) lie on the Cytoplasmic side of the membrane. The interval 566 to 582 (FYQNDVQNAVERSIVRV) is amphipathic alpha-helix. Residues His878 and Asp896 each act as for protease 2A activity in the active site. Residues Cys913 and Cys915 each contribute to the Zn(2+) site. Cys967 serves as the catalytic For protease 2A activity. Zn(2+) is bound by residues Cys973 and His975. Residues 1107 to 1179 (NNGWLKKFTE…EQSAPSQSDQ (73 aa)) form a membrane-binding region. The segment at 1107 to 1245 (NNGWLKKFTE…SPGVGKSVAT (139 aa)) is oligomerization. Residues 1128–1132 (AIKIQ) are RNA-binding. An SF3 helicase domain is found at 1211-1367 (EKKMSNYIQF…SMYNQNGKIN (157 aa)). The Zn(2+) site is built by Cys1375, Cys1387, and Cys1392. Residues 1375–1392 (CDEECCPVNFKKCCPLVC) form a C4-type; degenerate zinc finger. Positions 1419–1426 (EYNHRHSV) are RNA-binding. The oligomerization stretch occupies residues 1430–1435 (LEALFQ). An intramembrane segment occupies 1502–1517 (ALTTFVSVAGIIYIIY). Residues 1518-2191 (KLFAGFQGAY…TLRRKWLDSF (674 aa)) lie on the Cytoplasmic side of the membrane. Residue Tyr1527 is modified to O-(5'-phospho-RNA)-tyrosine. Positions 1547-1725 (GPAFEFAVAM…FSAALLKHYF (179 aa)) constitute a Peptidase C3 domain. Catalysis depends on for protease 3C activity residues His1586, Glu1617, and Cys1693. The RdRp catalytic domain maps to 1956–2072 (GHLIAFDYSG…SYPWPIDASL (117 aa)). Mg(2+)-binding residues include Asp1962 and Asp2058.

Belongs to the picornaviruses polyprotein family. In terms of assembly, interacts with capsid protein VP1 and capsid protein VP3 to form heterotrimeric protomers. As to quaternary structure, interacts with capsid protein VP0, and capsid protein VP3 to form heterotrimeric protomers. Five protomers subsequently associate to form pentamers which serve as building blocks for the capsid. Interacts with capsid protein VP2, capsid protein VP3 and capsid protein VP4 following cleavage of capsid protein VP0. Interacts with host CD55 and FCGRT; these interactions promote virus attachment to the host cell and subsequent internalization. Interacts with capsid protein VP1 and capsid protein VP3 in the mature capsid. Interacts with host CD55 and FCGRT; these interactions promote virus attachment to the host cell and subsequent internalization. In terms of assembly, interacts with capsid protein VP0 and capsid protein VP1 to form heterotrimeric protomers. Five protomers subsequently associate to form pentamers which serve as building blocks for the capsid. Interacts with capsid protein VP4 in the mature capsid. Interacts with protein 2C; this interaction may be important for virion morphogenesis. Interacts with host FCGRT; this interaction promotes virus attachment to the host cell and subsequent internalization. As to quaternary structure, interacts with capsid protein VP1 and capsid protein VP3. Homodimer. In terms of assembly, homohexamer; forms a hexameric ring structure with 6-fold symmetry characteristic of AAA+ ATPases. Interacts (via N-terminus) with host RTN3 (via reticulon domain); this interaction is important for viral replication. Interacts with capsid protein VP3; this interaction may be important for virion morphogenesis. As to quaternary structure, interacts with protein 3CD. Homodimer. Interacts with host GBF1. Interacts (via GOLD domain) with host ACBD3 (via GOLD domain); this interaction allows the formation of a viral protein 3A/ACBD3 heterotetramer with a 2:2 stoichiometry, which will stimulate the recruitment of host PI4KB in order to synthesize PI4P at the viral RNA replication sites. In terms of assembly, interacts with RNA-directed RNA polymerase. As to quaternary structure, interacts with protein 3AB and with RNA-directed RNA polymerase. Interacts with Viral protein genome-linked and with protein 3CD. Mg(2+) is required as a cofactor. In terms of processing, specific enzymatic cleavages in vivo by the viral proteases yield processing intermediates and the mature proteins. Post-translationally, myristoylation is required for the formation of pentamers during virus assembly. Further assembly of 12 pentamers and a molecule of genomic RNA generates the provirion. During virion maturation, immature virions are rendered infectious following cleavage of VP0 into VP4 and VP2. This maturation seems to be an autocatalytic event triggered by the presence of RNA in the capsid and it is followed by a conformational change infectious virion. In terms of processing, myristoylation is required during RNA encapsidation and formation of the mature virus particle. Post-translationally, VPg is uridylylated by the polymerase into VPg-pUpU. This acts as a nucleotide-peptide primer for the genomic RNA replication.

It is found in the virion. The protein localises to the host cytoplasm. The protein resides in the host cytoplasmic vesicle membrane. It localises to the host nucleus. It carries out the reaction a ribonucleoside 5'-triphosphate + H2O = a ribonucleoside 5'-diphosphate + phosphate + H(+). The catalysed reaction is Selective cleavage of Tyr-|-Gly bond in the picornavirus polyprotein.. The enzyme catalyses RNA(n) + a ribonucleoside 5'-triphosphate = RNA(n+1) + diphosphate. It catalyses the reaction Selective cleavage of Gln-|-Gly bond in the poliovirus polyprotein. In other picornavirus reactions Glu may be substituted for Gln, and Ser or Thr for Gly.. With respect to regulation, replication or transcription is subject to high level of random mutations by the nucleotide analog ribavirin. Forms an icosahedral capsid of pseudo T=3 symmetry with capsid proteins VP2 and VP3. The capsid is 300 Angstroms in diameter, composed of 60 copies of each capsid protein and enclosing the viral positive strand RNA genome. Capsid protein VP1 mainly forms the vertices of the capsid. Capsid protein VP1 interacts with host cell receptor to provide virion attachment to target host cells. This attachment induces virion internalization. Tyrosine kinases are probably involved in the entry process. After binding to its receptor, the capsid undergoes conformational changes. Capsid protein VP1 N-terminus (that contains an amphipathic alpha-helix) and capsid protein VP4 are externalized. Together, they shape a pore in the host membrane through which viral genome is translocated to host cell cytoplasm. In terms of biological role, forms an icosahedral capsid of pseudo T=3 symmetry with capsid proteins VP2 and VP3. The capsid is 300 Angstroms in diameter, composed of 60 copies of each capsid protein and enclosing the viral positive strand RNA genome. Its function is as follows. Lies on the inner surface of the capsid shell. After binding to the host receptor, the capsid undergoes conformational changes. Capsid protein VP4 is released, Capsid protein VP1 N-terminus is externalized, and together, they shape a pore in the host membrane through which the viral genome is translocated into the host cell cytoplasm. Functionally, component of immature procapsids, which is cleaved into capsid proteins VP4 and VP2 after maturation. Allows the capsid to remain inactive before the maturation step. Cysteine protease that cleaves viral polyprotein and specific host proteins. It is responsible for the autocatalytic cleavage between the P1 and P2 regions, which is the first cleavage occurring in the polyprotein. Also cleaves the host translation initiation factor EIF4G1, in order to shut down the capped cellular mRNA translation. Inhibits the host nucleus-cytoplasm protein and RNA trafficking by cleaving host members of the nuclear pores. Counteracts stress granule formation probably by antagonizing its assembly or promoting its dissassembly. In terms of biological role, plays an essential role in the virus replication cycle by acting as a viroporin. Creates a pore in the host endoplasmic reticulum and as a consequence releases Ca2+ in the cytoplasm of infected cell. In turn, high levels of cytoplasmic calcium may trigger membrane trafficking and transport of viral ER-associated proteins to viroplasms, sites of viral genome replication. Its function is as follows. Induces and associates with structural rearrangements of intracellular membranes. Displays RNA-binding, nucleotide binding and NTPase activities. May play a role in virion morphogenesis and viral RNA encapsidation by interacting with the capsid protein VP3. Functionally, localizes the viral replication complex to the surface of membranous vesicles. Together with protein 3CD binds the Cis-Active RNA Element (CRE) which is involved in RNA synthesis initiation. Acts as a cofactor to stimulate the activity of 3D polymerase, maybe through a nucleid acid chaperone activity. Localizes the viral replication complex to the surface of membranous vesicles. It inhibits host cell endoplasmic reticulum-to-Golgi apparatus transport and causes the disassembly of the Golgi complex, possibly through GBF1 interaction. This would result in depletion of MHC, trail receptors and IFN receptors at the host cell surface. Plays an essential role in viral RNA replication by recruiting ACBD3 and PI4KB at the viral replication sites, thereby allowing the formation of the rearranged membranous structures where viral replication takes place. In terms of biological role, acts as a primer for viral RNA replication and remains covalently bound to viral genomic RNA. VPg is uridylylated prior to priming replication into VPg-pUpU. The oriI viral genomic sequence may act as a template for this. The VPg-pUpU is then used as primer on the genomic RNA poly(A) by the RNA-dependent RNA polymerase to replicate the viral genome. During genome replication, the VPg-RNA linkage is removed by the host TDP2, thereby accelerating replication. During the late stage of the replication cycle, host TDP2 is excluded from sites of viral RNA synthesis and encapsidation, allowing for the generation of progeny virions. Its function is as follows. Involved in the viral replication complex and viral polypeptide maturation. It exhibits protease activity with a specificity and catalytic efficiency that is different from protease 3C. Protein 3CD binds to the 5'UTR of the viral genome. Functionally, replicates the viral genomic RNA on the surface of intracellular membranes. May form linear arrays of subunits that propagate along a strong head-to-tail interaction called interface-I. Covalently attaches UMP to a tyrosine of VPg, which is used to prime RNA synthesis. The positive stranded RNA genome is first replicated at virus induced membranous vesicles, creating a dsRNA genomic replication form. This dsRNA is then used as template to synthesize positive stranded RNA genomes. ss(+)RNA genomes are either translated, replicated or encapsidated. Major viral protease that mediates proteolytic processing of the polyprotein. Cleaves host EIF5B, contributing to host translation shutoff. Also cleaves host PABPC1, contributing to host translation shutoff. Cleaves host NLRP1, triggers host N-glycine-mediated degradation of the autoinhibitory NLRP1 N-terminal fragment. This is Genome polyprotein from Echovirus 6 (strain Charles).